The primary structure comprises 295 residues: Indole-3-glycerol phosphate synthase (295 aa).

This sequence belongs to the TrpC family.

It catalyses the reaction 1-(2-carboxyphenylamino)-1-deoxy-D-ribulose 5-phosphate + H(+) = (1S,2R)-1-C-(indol-3-yl)glycerol 3-phosphate + CO2 + H2O. The protein operates within amino-acid biosynthesis; L-tryptophan biosynthesis; L-tryptophan from chorismate: step 4/5. This is Indole-3-glycerol phosphate synthase from Synechococcus sp. (strain ATCC 27144 / PCC 6301 / SAUG 1402/1) (Anacystis nidulans).